Reading from the N-terminus, the 637-residue chain is Chaperone protein HtpG (637 aa).

The interval 1–335 (MQGTVNSERL…SSDLPLNISR (335 aa)) is a; substrate-binding. A b region spans residues 336–559 (ETLQNNKIIE…DGSMDIRMER (224 aa)). Positions 560-637 (FLREQKQLNY…RMNNVLSQIN (78 aa)) are c.

This sequence belongs to the heat shock protein 90 family. Homodimer.

The protein resides in the cytoplasm. Functionally, molecular chaperone. Has ATPase activity. In Ehrlichia ruminantium (strain Welgevonden), this protein is Chaperone protein HtpG.